The chain runs to 867 residues: Protein argonaute-3 (867 aa).

A necessary and sufficient for interaction with krimp region spans residues 1–83; sequence MSGRGNLLSL…IDTLKTDDHT (83 aa). The interaction with papi stretch occupies residues 1-289; the sequence is MSGRGNLLSL…CDVSHRILCQ (289 aa). Symmetric dimethylarginine is present on residues Arg-4, Arg-68, and Arg-70. One can recognise a PAZ domain in the interval 291 to 402; sequence TVLEMLVDLY…LIPELCYLTG (112 aa). The Piwi domain occupies 566–853; it reads MVVCICHNRR…LAYLIGQSIQ (288 aa).

Belongs to the argonaute family. Piwi subfamily. In terms of assembly, component of the ping-pong piRNA processing (4P) complex consisting of krimp, aub and AGO3. Interacts (via N-terminus when not methylated on arginine residues) with krimp (via non-canonical tudor domain); this interaction leads to symmetrical dimethylation on AGO3 arginine residues and its subsequent dissociation from krimp. Krimp associated AGO3 is mostly free of piRNA binding and the interaction plays an important role in the loading of AGO3 with piRNAs; piRNA binding may stimulate dissociation of the two proteins. May form part of a piRNA processing complex consisting of tud, aub and AGO3. Interacts (when symmetrically dimethylated on arginine residues) with tud. Forms a complex with smg, twin, aub, nos mRNA and piRNAs that target the nos 3'-untranslated region, in early embryos. Interacts (via the N-terminal region when symmetrically methylated on arginine residues) with papi (via C-terminus); this interaction is RNA-independent and may be required for AGO3 localization to the nuage. Interacts with TER94 and tral. Symmetrically dimethylated on Arg-4, Arg-68 and Arg-70, most likely by csul/PRMT5/DART5. Methylation state probably functions as an indicator of its piRNA binding state. In terms of tissue distribution, in ovary, expressed in germline stem cells, germline cyst cells, nurse cells and oocytes during early stages. Also found in the somatic cap cells of the germarium. In testis, expressed in germline stem cells, primary gonial cells and early spermatocytes. No expression detected in the somatic hub cells at the apical tip of the testis (at protein level). Expressed in neurons throughout the adult brain and in the mushroom body subdivision in the peduncle. In the mushroom body, expressed only in gamma and core alpha-beta neurons.

It is found in the cytoplasm. The protein localises to the perinuclear region. Its subcellular location is the cytoplasmic ribonucleoprotein granule. In terms of biological role, component of the perinuclear meiotic nuage, a germline-specific subcellular membraneless ribonucleoprotein compartment involved in production of transposable element-repressing Piwi-interacting RNA (piRNA)-induced silencing complexes (piRISCs), which are essential for maintaining germline integrity during oogenesis. Acts via the Piwi-interacting RNA (piRNA) metabolic process, which mediates the repression of transposable elements during meiosis by forming complexes composed of piRNAs and Piwi proteins and governs the methylation and subsequent repression of transposons. Piwi protein that directly binds piRNAs, a class of 24 to 30 nucleotide RNAs that are generated by a Dicer-independent mechanism and are primarily derived from transposons and other repeated sequence elements. Associates predominantly with sense piRNAs that contain adenine at nucleotide 10, but shows no preference for uridine at the 5' end. Shows RNA cleavage or slicer activity. Together with Piwi protein aub recruited to subregions of the perinuclear nuage by krimp, which coordinates their activity in the ping-pong amplification step of secondary piRNA biogenesis. Krimp recruits piRNA bound aub and unbound AGO3, bringing them into close proximity to facilitate the loading onto AGO3 of freshly cut piRNAs generated by aub cleavage of target sequences; krimp recognizes the piRNA loading state of the Piwi proteins via symmetrically dimethylated arginine modification in their N-terminus. Important for asymmetric ping-pong amplification to bias production towards antisense piRNAs capable of silencing transposable elements. In testis, associates with Su(Ste) and AT-chX-1 piRNAs mostly produced from antisense precursors. In the germline, acts to amplify pools of antisense piRNAs, among others Su(Ste), AT-chX-1 and roo, and to limit sense piRNA accumulation. Forms a complex with smg, twin, aub and specific piRNAs that targets nos mRNA (and probably other maternal mRNAS) for deadenylation promoting its decay during early embryogenesis. Involved in transposon silencing in the adult brain. This Drosophila melanogaster (Fruit fly) protein is Protein argonaute-3.